The primary structure comprises 91 residues: UPF0250 protein BP0104 (91 aa).

This sequence belongs to the UPF0250 family.

In Bordetella pertussis (strain Tohama I / ATCC BAA-589 / NCTC 13251), this protein is UPF0250 protein BP0104.